The primary structure comprises 204 residues: Redox-sensing transcriptional repressor Rex 2 (204 aa).

The H-T-H motif DNA-binding region spans 17 to 53; sequence MYRKVLEATKKPYISSDEIARFLEINPDLVRKDFSYL.

This sequence belongs to the transcriptional regulatory Rex family. In terms of assembly, homodimer.

The protein localises to the cytoplasm. Its function is as follows. Modulates transcription in response to changes in cellular NADH/NAD(+) redox state. In Thermotoga maritima (strain ATCC 43589 / DSM 3109 / JCM 10099 / NBRC 100826 / MSB8), this protein is Redox-sensing transcriptional repressor Rex 2 (rex2).